Here is a 282-residue protein sequence, read N- to C-terminus: 4-diphosphocytidyl-2-C-methyl-D-erythritol kinase (282 aa).

K8 is an active-site residue. 91 to 101 (PVAAGLAGGST) contacts ATP. D133 is an active-site residue.

It belongs to the GHMP kinase family. IspE subfamily.

It catalyses the reaction 4-CDP-2-C-methyl-D-erythritol + ATP = 4-CDP-2-C-methyl-D-erythritol 2-phosphate + ADP + H(+). The protein operates within isoprenoid biosynthesis; isopentenyl diphosphate biosynthesis via DXP pathway; isopentenyl diphosphate from 1-deoxy-D-xylulose 5-phosphate: step 3/6. In terms of biological role, catalyzes the phosphorylation of the position 2 hydroxy group of 4-diphosphocytidyl-2C-methyl-D-erythritol. This Symbiobacterium thermophilum (strain DSM 24528 / JCM 14929 / IAM 14863 / T) protein is 4-diphosphocytidyl-2-C-methyl-D-erythritol kinase.